The chain runs to 123 residues: 1,4-dihydroxy-2-naphthoyl-CoA hydrolase (123 aa).

E46 (nucleophile or proton acceptor) is an active-site residue.

It belongs to the thioesterase PaaI family.

The catalysed reaction is 1,4-dihydroxy-2-naphthoyl-CoA + H2O = 1,4-dihydroxy-2-naphthoate + CoA + H(+). The protein operates within quinol/quinone metabolism; menaquinone biosynthesis. Catalyzes the hydrolysis of 1,4-dihydroxy-2-naphthoyl-CoA (DHNA-CoA) to 1,4-dihydroxy-2-naphthoate (DHNA) and free coenzyme A. Production of DHNA is required for protection against bacteriolysis in the cytosol of macrophages and tissue-specific virulence in vivo, suggesting that MenI is required to protect the bacteria from killing in the macrophage cytosol. This is 1,4-dihydroxy-2-naphthoyl-CoA hydrolase from Listeria monocytogenes serotype 1/2a (strain 10403S).